An 837-amino-acid chain; its full sequence is Protein translocase subunit SecA (837 aa).

ATP is bound by residues Gln-85, 103–107 (GEGKT), and Asp-493. Zn(2+)-binding residues include Cys-821, Cys-823, Cys-832, and His-833.

Belongs to the SecA family. As to quaternary structure, monomer and homodimer. Part of the essential Sec protein translocation apparatus which comprises SecA, SecYEG and auxiliary proteins SecDF. Other proteins may also be involved. Zn(2+) serves as cofactor.

It is found in the cell membrane. It localises to the cytoplasm. It carries out the reaction ATP + H2O + cellular proteinSide 1 = ADP + phosphate + cellular proteinSide 2.. In terms of biological role, part of the Sec protein translocase complex. Interacts with the SecYEG preprotein conducting channel. Has a central role in coupling the hydrolysis of ATP to the transfer of proteins into and across the cell membrane, serving as an ATP-driven molecular motor driving the stepwise translocation of polypeptide chains across the membrane. The polypeptide is Protein translocase subunit SecA (Streptococcus pneumoniae (strain P1031)).